The chain runs to 388 residues: Staphopain A (388 aa).

Positions 1-25 (MKRNFPKLIALSLILSLSVTPIANA) are cleaved as a signal peptide. The propeptide occupies 26–214 (ESNSNIKAKD…TSQFKSNNYT (189 aa)). Residues cysteine 238, histidine 334, and asparagine 355 contribute to the active site.

It belongs to the peptidase C47 family. In terms of assembly, in the cytoplasm, prematurely activated/folded ScpA forms a stable non-covalent complex with ScpB. In terms of processing, cleavage leads to the activation of ScpA probably by an auto-catalytic manner.

The protein resides in the secreted. The catalysed reaction is Broad endopeptidase action on proteins including elastin, but rather limited hydrolysis of small-molecule substrates. Assays are conveniently made with hemoglobin, casein or Z-Phe-Arg-NHMec as substrate.. Its activity is regulated as follows. Prematurely activated/folded staphopain A is inhibited by staphostatin A (ScpB), which is probably required to protect staphylococcal cytoplasmic proteins from degradation by ScpA. Cysteine protease that plays an important role in the inhibition of host innate immune response. Cleaves host elastins found in connective tissues, pulmonary surfactant protein A in the lungs, and the chemokine receptor CXCR2 on leukocytes. Proteolytic cleavage of surfactant protein A impairs bacterial phagocytosis by neutrophils while CXCR2 degradation blocks neutrophil activation and chemotaxis. Additionally, promotes vascular leakage by activating the plasma kallikerin/kinin system, resulting in hypotension. This chain is Staphopain A (sspP), found in Staphylococcus aureus (strain MSSA476).